Consider the following 941-residue polypeptide: Gamma-aminobutyric acid type B receptor subunit 2 (941 aa).

An N-terminal signal peptide occupies residues methionine 1 to glycine 41. Residues tryptophan 42–serine 483 lie on the Extracellular side of the membrane. Asparagine 90 is a glycosylation site (N-linked (GlcNAc...) asparagine). Intrachain disulfides connect cysteine 108-cysteine 135, cysteine 237-cysteine 266, and cysteine 265-cysteine 302. N-linked (GlcNAc...) asparagine glycosylation is found at asparagine 298, asparagine 389, asparagine 404, and asparagine 453. Residues isoleucine 484 to isoleucine 504 traverse the membrane as a helical segment. Topologically, residues lysine 505–leucine 522 are cytoplasmic. The chain crosses the membrane as a helical span at residues isoleucine 523–phenylalanine 543. Residues valine 544 to threonine 551 lie on the Extracellular side of the membrane. Residues leucine 552–phenylalanine 572 form a helical membrane-spanning segment. Over alanine 573–leucine 597 the chain is Cytoplasmic. Residues leucine 598–valine 618 traverse the membrane as a helical segment. Topologically, residues aspartate 619–threonine 654 are extracellular. A helical membrane pass occupies residues isoleucine 655 to alanine 675. Over tryptophan 676 to tyrosine 691 the chain is Cytoplasmic. A helical membrane pass occupies residues isoleucine 692–leucine 712. Topologically, residues threonine 713 to glutamine 720 are extracellular. The helical transmembrane segment at phenylalanine 721–valine 741 threads the bilayer. The Cytoplasmic segment spans residues proline 742–leucine 941. The segment at threonine 763–glycine 790 is disordered. The span at threonine 773 to arginine 787 shows a compositional bias: polar residues. A phosphoserine mark is found at serine 776 and serine 779. The stretch at asparagine 781–threonine 819 forms a coiled coil. The residue at position 819 (threonine 819) is a Phosphothreonine. Phosphoserine occurs at positions 884, 893, 913, 916, 920, and 924.

Belongs to the G-protein coupled receptor 3 family. GABA-B receptor subfamily. As to quaternary structure, heterodimer of GABBR1 and GABBR2. Homodimers may form, but are inactive. Interacts (via C-terminus) with ATF4 (via leucine zipper domain). As to expression, highly expressed in brain, especially in cerebral cortex, thalamus, hippocampus, frontal, occipital and temporal lobe, occipital pole and cerebellum, followed by corpus callosum, caudate nucleus, spinal cord, amygdala and medulla. Weakly expressed in heart, testis and skeletal muscle.

The protein localises to the cell membrane. Its subcellular location is the postsynaptic cell membrane. In terms of biological role, component of a heterodimeric G-protein coupled receptor for GABA, formed by GABBR1 and GABBR2. Within the heterodimeric GABA receptor, only GABBR1 seems to bind agonists, while GABBR2 mediates coupling to G proteins. Ligand binding causes a conformation change that triggers signaling via guanine nucleotide-binding proteins (G proteins) and modulates the activity of down-stream effectors, such as adenylate cyclase. Signaling inhibits adenylate cyclase, stimulates phospholipase A2, activates potassium channels, inactivates voltage-dependent calcium-channels and modulates inositol phospholipid hydrolysis. Plays a critical role in the fine-tuning of inhibitory synaptic transmission. Pre-synaptic GABA receptor inhibits neurotransmitter release by down-regulating high-voltage activated calcium channels, whereas postsynaptic GABA receptor decreases neuronal excitability by activating a prominent inwardly rectifying potassium (Kir) conductance that underlies the late inhibitory postsynaptic potentials. Not only implicated in synaptic inhibition but also in hippocampal long-term potentiation, slow wave sleep, muscle relaxation and antinociception. The chain is Gamma-aminobutyric acid type B receptor subunit 2 (GABBR2) from Homo sapiens (Human).